The primary structure comprises 1066 residues: Probable sucrose-phosphate synthase 4 (1066 aa).

Disordered regions lie at residues 132–166 and 688–714; these read YAAA…GRMP and PRHP…SLRD. Residues 143–162 show a composition bias toward basic and acidic residues; the sequence is EGEKGENINESSSTHDESTR.

The protein belongs to the glycosyltransferase 1 family. In terms of assembly, homodimer or homotetramer. As to expression, expressed in germinating seeds.

It carries out the reaction beta-D-fructose 6-phosphate + UDP-alpha-D-glucose = sucrose 6(F)-phosphate + UDP + H(+). The protein operates within glycan biosynthesis; sucrose biosynthesis; sucrose from D-fructose 6-phosphate and UDP-alpha-D-glucose: step 1/2. Its activity is regulated as follows. Activity is regulated by phosphorylation and moderated by concentration of metabolites and light. Its function is as follows. Plays a role in photosynthetic sucrose synthesis by catalyzing the rate-limiting step of sucrose biosynthesis from UDP-glucose and fructose- 6-phosphate. Involved in the regulation of carbon partitioning in the leaves of plants. May regulate the synthesis of sucrose and therefore play a major role as a limiting factor in the export of photoassimilates out of the leaf. Plays a role for sucrose availability that is essential for plant growth and fiber elongation. The chain is Probable sucrose-phosphate synthase 4 (SPS4) from Oryza sativa subsp. japonica (Rice).